The chain runs to 503 residues: Maturase K (503 aa).

Belongs to the intron maturase 2 family. MatK subfamily.

It is found in the plastid. The protein resides in the chloroplast. Its function is as follows. Usually encoded in the trnK tRNA gene intron. Probably assists in splicing its own and other chloroplast group II introns. The sequence is that of Maturase K from Rosa rugosa (Rugosa rose).